The chain runs to 227 residues: Cytochrome c oxidase subunit 2 (227 aa).

Residues 1–14 (MAHPVQLSLQDATS) lie on the Mitochondrial intermembrane side of the membrane. A helical transmembrane segment spans residues 15-45 (PVMEELITFHDHAFMAMSLISFLVLYALLST). Over 46–59 (LTTKLTNTSITDAQ) the chain is Mitochondrial matrix. The chain crosses the membrane as a helical span at residues 60 to 87 (EMETIWTILPAIILILIALPSLRILYLT). Over 88 to 227 (DEVNDPSFTI…IFEMGPVLTL (140 aa)) the chain is Mitochondrial intermembrane. Cu cation-binding residues include His-161, Cys-196, Glu-198, Cys-200, His-204, and Met-207. Glu-198 provides a ligand contact to Mg(2+).

Belongs to the cytochrome c oxidase subunit 2 family. As to quaternary structure, component of the cytochrome c oxidase (complex IV, CIV), a multisubunit enzyme composed of 14 subunits. The complex is composed of a catalytic core of 3 subunits MT-CO1, MT-CO2 and MT-CO3, encoded in the mitochondrial DNA, and 11 supernumerary subunits COX4I, COX5A, COX5B, COX6A, COX6B, COX6C, COX7A, COX7B, COX7C, COX8 and NDUFA4, which are encoded in the nuclear genome. The complex exists as a monomer or a dimer and forms supercomplexes (SCs) in the inner mitochondrial membrane with NADH-ubiquinone oxidoreductase (complex I, CI) and ubiquinol-cytochrome c oxidoreductase (cytochrome b-c1 complex, complex III, CIII), resulting in different assemblies (supercomplex SCI(1)III(2)IV(1) and megacomplex MCI(2)III(2)IV(2)). Found in a complex with TMEM177, COA6, COX18, COX20, SCO1 and SCO2. Interacts with TMEM177 in a COX20-dependent manner. Interacts with COX20. Interacts with COX16. Cu cation serves as cofactor.

It is found in the mitochondrion inner membrane. It catalyses the reaction 4 Fe(II)-[cytochrome c] + O2 + 8 H(+)(in) = 4 Fe(III)-[cytochrome c] + 2 H2O + 4 H(+)(out). In terms of biological role, component of the cytochrome c oxidase, the last enzyme in the mitochondrial electron transport chain which drives oxidative phosphorylation. The respiratory chain contains 3 multisubunit complexes succinate dehydrogenase (complex II, CII), ubiquinol-cytochrome c oxidoreductase (cytochrome b-c1 complex, complex III, CIII) and cytochrome c oxidase (complex IV, CIV), that cooperate to transfer electrons derived from NADH and succinate to molecular oxygen, creating an electrochemical gradient over the inner membrane that drives transmembrane transport and the ATP synthase. Cytochrome c oxidase is the component of the respiratory chain that catalyzes the reduction of oxygen to water. Electrons originating from reduced cytochrome c in the intermembrane space (IMS) are transferred via the dinuclear copper A center (CU(A)) of subunit 2 and heme A of subunit 1 to the active site in subunit 1, a binuclear center (BNC) formed by heme A3 and copper B (CU(B)). The BNC reduces molecular oxygen to 2 water molecules using 4 electrons from cytochrome c in the IMS and 4 protons from the mitochondrial matrix. The polypeptide is Cytochrome c oxidase subunit 2 (MT-CO2) (Macaca mulatta (Rhesus macaque)).